The primary structure comprises 540 residues: Chaperonin GroEL 3 (540 aa).

ATP is bound by residues 30–33, Lys51, 87–91, Gly415, 480–482, and Asp496; these read TLGP, DGTTT, and NAA.

Belongs to the chaperonin (HSP60) family. As to quaternary structure, forms a cylinder of 14 subunits composed of two heptameric rings stacked back-to-back. Interacts with the co-chaperonin GroES.

It is found in the cytoplasm. The catalysed reaction is ATP + H2O + a folded polypeptide = ADP + phosphate + an unfolded polypeptide.. Functionally, together with its co-chaperonin GroES, plays an essential role in assisting protein folding. The GroEL-GroES system forms a nano-cage that allows encapsulation of the non-native substrate proteins and provides a physical environment optimized to promote and accelerate protein folding. In Bradyrhizobium sp. (strain BTAi1 / ATCC BAA-1182), this protein is Chaperonin GroEL 3.